Here is a 243-residue protein sequence, read N- to C-terminus: uncharacterized protein (243 aa).

C120 and C157 together coordinate [4Fe-4S] cluster.

As to quaternary structure, homodimer. [4Fe-4S] cluster serves as cofactor.

This is an uncharacterized protein from Methanocaldococcus jannaschii (strain ATCC 43067 / DSM 2661 / JAL-1 / JCM 10045 / NBRC 100440) (Methanococcus jannaschii).